Here is a 48-residue protein sequence, read N- to C-terminus: Large ribosomal subunit protein bL33B (48 aa).

This sequence belongs to the bacterial ribosomal protein bL33 family.

In Streptococcus thermophilus (strain CNRZ 1066), this protein is Large ribosomal subunit protein bL33B.